Reading from the N-terminus, the 422-residue chain is 5'-deoxyadenosine deaminase (422 aa).

His-57 and His-59 together coordinate Zn(2+). Positions 86 and 178 each coordinate substrate. His-205 is a binding site for Zn(2+). Substrate is bound by residues Glu-208 and Asp-294. Asp-294 is a binding site for Zn(2+).

Belongs to the metallo-dependent hydrolases superfamily. MTA/SAH deaminase family. Homotetramer. Requires Zn(2+) as cofactor.

The catalysed reaction is 5'-deoxyadenosine + H2O + H(+) = 5'-deoxyinosine + NH4(+). The enzyme catalyses S-adenosyl-L-homocysteine + H2O + H(+) = S-inosyl-L-homocysteine + NH4(+). It catalyses the reaction S-methyl-5'-thioadenosine + H2O + H(+) = S-methyl-5'-thioinosine + NH4(+). It carries out the reaction adenosine + H2O + H(+) = inosine + NH4(+). Its pathway is amino-acid biosynthesis; S-adenosyl-L-methionine biosynthesis. Catalyzes the deamination of three SAM-derived enzymatic products, namely 5'-deoxyadenosine, S-adenosyl-L-homocysteine, and 5'-methylthioadenosine, to produce the inosine analogs. Can also deaminate adenosine. The preferred substrate for this enzyme is 5'-deoxyadenosine, but all these substrates are efficiently deaminated. Likely functions in a S-adenosyl-L-methionine (SAM) recycling pathway from S-adenosyl-L-homocysteine (SAH) produced from SAM-dependent methylation reactions. May also be involved in the recycling of 5'-deoxyadenosine, whereupon the 5'-deoxyribose moiety of 5'-deoxyinosine is further metabolized to deoxyhexoses used for the biosynthesis of aromatic amino acids in methanogens. The chain is 5'-deoxyadenosine deaminase from Methanococcus vannielii (strain ATCC 35089 / DSM 1224 / JCM 13029 / OCM 148 / SB).